A 293-amino-acid chain; its full sequence is Glycine--tRNA ligase alpha subunit (293 aa).

The protein belongs to the class-II aminoacyl-tRNA synthetase family. Tetramer of two alpha and two beta subunits.

The protein resides in the cytoplasm. It catalyses the reaction tRNA(Gly) + glycine + ATP = glycyl-tRNA(Gly) + AMP + diphosphate. The sequence is that of Glycine--tRNA ligase alpha subunit from Acaryochloris marina (strain MBIC 11017).